The sequence spans 217 residues: N-(5'-phosphoribosyl)anthranilate isomerase (217 aa).

This sequence belongs to the TrpF family.

It catalyses the reaction N-(5-phospho-beta-D-ribosyl)anthranilate = 1-(2-carboxyphenylamino)-1-deoxy-D-ribulose 5-phosphate. It functions in the pathway amino-acid biosynthesis; L-tryptophan biosynthesis; L-tryptophan from chorismate: step 3/5. The protein is N-(5'-phosphoribosyl)anthranilate isomerase of Chlorobium phaeovibrioides (strain DSM 265 / 1930) (Prosthecochloris vibrioformis (strain DSM 265)).